The primary structure comprises 512 residues: 2,3-bisphosphoglycerate-independent phosphoglycerate mutase (512 aa).

Mn(2+) is bound by residues D11 and S61. S61 functions as the Phosphoserine intermediate in the catalytic mechanism. Residues H122, 152–153, R184, R190, 259–262, and K332 contribute to the substrate site; these read RD and RADR. D399, H403, D440, H441, and H459 together coordinate Mn(2+).

This sequence belongs to the BPG-independent phosphoglycerate mutase family. Monomer. Requires Mn(2+) as cofactor.

The catalysed reaction is (2R)-2-phosphoglycerate = (2R)-3-phosphoglycerate. The protein operates within carbohydrate degradation; glycolysis; pyruvate from D-glyceraldehyde 3-phosphate: step 3/5. Its function is as follows. Catalyzes the interconversion of 2-phosphoglycerate and 3-phosphoglycerate. The protein is 2,3-bisphosphoglycerate-independent phosphoglycerate mutase of Francisella tularensis subsp. tularensis (strain WY96-3418).